The following is a 259-amino-acid chain: Ribonuclease PH (259 aa).

Phosphate contacts are provided by residues Arg88 and 126 to 128; that span reads GTR.

Belongs to the RNase PH family. In terms of assembly, homohexameric ring arranged as a trimer of dimers.

The catalysed reaction is tRNA(n+1) + phosphate = tRNA(n) + a ribonucleoside 5'-diphosphate. Functionally, phosphorolytic 3'-5' exoribonuclease that plays an important role in tRNA 3'-end maturation. Removes nucleotide residues following the 3'-CCA terminus of tRNAs; can also add nucleotides to the ends of RNA molecules by using nucleoside diphosphates as substrates, but this may not be physiologically important. Probably plays a role in initiation of 16S rRNA degradation (leading to ribosome degradation) during starvation. The sequence is that of Ribonuclease PH from Mycobacterium bovis (strain ATCC BAA-935 / AF2122/97).